The primary structure comprises 132 residues: Small ribosomal subunit protein uS8 (132 aa).

Belongs to the universal ribosomal protein uS8 family. Part of the 30S ribosomal subunit. Contacts proteins S5 and S12.

Its function is as follows. One of the primary rRNA binding proteins, it binds directly to 16S rRNA central domain where it helps coordinate assembly of the platform of the 30S subunit. This Clostridioides difficile (strain 630) (Peptoclostridium difficile) protein is Small ribosomal subunit protein uS8.